A 134-amino-acid chain; its full sequence is ATP synthase epsilon chain (134 aa).

Belongs to the ATPase epsilon chain family. In terms of assembly, F-type ATPases have 2 components, CF(1) - the catalytic core - and CF(0) - the membrane proton channel. CF(1) has five subunits: alpha(3), beta(3), gamma(1), delta(1), epsilon(1). CF(0) has three main subunits: a, b and c.

The protein resides in the cell membrane. Produces ATP from ADP in the presence of a proton gradient across the membrane. The chain is ATP synthase epsilon chain from Pelotomaculum thermopropionicum (strain DSM 13744 / JCM 10971 / SI).